The primary structure comprises 2062 residues: Unconventional myosin-X (2062 aa).

Methionine 1 is subject to N-acetylmethionine. The Myosin motor domain occupies 63 to 739 (EGVDDMASLA…LEQKLEKRRE (677 aa)). Residues asparagine 104, tyrosine 113, 160–165 (GAGKTE), and asparagine 215 contribute to the ATP site. An actin-binding region spans residues 619–641 (LHSLMATLSSSNPFFVRCIKPNT). IQ domains lie at 742 to 771 (IDRA…GVVT), 765 to 794 (VLCG…AAIV), and 788 to 817 (LKKA…EKRE). The SAH stretch occupies residues 814-882 (EKRELEEKKR…LTRELEKQRE (69 aa)). The segment at 822 to 844 (KRREEEKKREEEERERERAQREA) is disordered. Residues 883-933 (NKQVEEILRLEKEIEDLQRMKERQELSLTEASLQKLQQLRDEELRRLEDEA) adopt a coiled-coil conformation. Residues serine 961, serine 964, and serine 967 each carry the phosphoserine modification. 2 disordered regions span residues 963 to 1047 (GSEI…VVPT) and 1062 to 1089 (QDSA…LPSP). Positions 993–1007 (AEEEVDEGFEADDDA) are enriched in acidic residues. Over residues 1062-1085 (QDSASLHNSSSGESTYCMPQNNGD) the composition is skewed to polar residues. Threonine 1162 is modified (phosphothreonine). 2 PH domains span residues 1216–1314 (EALK…QVHS) and 1396–1501 (EFIV…NVTD). The region spanning 1551-1699 (LPYGDINLNL…PSRDEIEALI (149 aa)) is the MyTH4 domain. The FERM domain maps to 1704–2048 (MTSTVYCHGG…AYISMIVKKR (345 aa)).

Belongs to the TRAFAC class myosin-kinesin ATPase superfamily. Myosin family. As to quaternary structure, monomer, when in an inactive conformation in the cytosol. Homodimer in its active, membrane-bound conformation; antiparallel coiled coil-mediated dimer formation. Interacts with ECPAS. Interacts with DCC and ITGB5; the presence of DCC inhibits ITGB5 binding. Interacts with tubulin; ITGB5 or DCC binding inhibits tubulin binding. Interacts strongly with CALM3 and weakly with CALM, the CALM3 interaction is essential for function in filopodial extension and motility. Interacts with ITGB1, ITGB3 and ITGB5. Interacts with NEO1. Interacts with VASP. The initiator methionine for isoform Headless is removed. In terms of tissue distribution, detected in brain, heart, kidney, liver, stomach, skeletal muscle, lung, testis and skin. Isoform Headless is expressed in embryonic and neuronal stem cells, and enriched in proliferating and migrating cells.

It localises to the cytoplasm. It is found in the cytosol. Its subcellular location is the cell projection. The protein resides in the lamellipodium. The protein localises to the ruffle. It localises to the cytoskeleton. It is found in the filopodium tip. Its subcellular location is the cell cortex. The protein resides in the filopodium membrane. In terms of biological role, myosins are actin-based motor molecules with ATPase activity. Unconventional myosins serve in intracellular movements. MYO10 binds to actin filaments and actin bundles and functions as a plus end-directed motor. Moves with higher velocity and takes larger steps on actin bundles than on single actin filaments. The tail domain binds to membranous compartments containing phosphatidylinositol 3,4,5-trisphosphate or integrins, and mediates cargo transport along actin filaments. Regulates cell shape, cell spreading and cell adhesion. Stimulates the formation and elongation of filopodia. In hippocampal neurons it induces the formation of dendritic filopodia by trafficking the actin-remodeling protein VASP to the tips of filopodia, where it promotes actin elongation. Plays a role in formation of the podosome belt in osteoclasts. Its function is as follows. Functions as a dominant-negative regulator of isoform 1, suppressing its filopodia-inducing and axon outgrowth-promoting activities. In hippocampal neurons, it increases VASP retention in spine heads to induce spine formation and spine head expansion. The sequence is that of Unconventional myosin-X (Myo10) from Mus musculus (Mouse).